A 534-amino-acid polypeptide reads, in one-letter code: Phosphoenolpyruvate carboxykinase (ATP) (534 aa).

3 residues coordinate substrate: Arg59, Tyr200, and Lys206. ATP is bound by residues Lys206, His225, and 242-250; that span reads GLSGTGKTT. The Mn(2+) site is built by Lys206 and His225. Asp263 contacts Mn(2+). Residues Glu291, Arg327, 443-444, and Thr449 each bind ATP; that span reads RI. Arg327 provides a ligand contact to substrate.

It belongs to the phosphoenolpyruvate carboxykinase (ATP) family. It depends on Mn(2+) as a cofactor.

It is found in the cytoplasm. It carries out the reaction oxaloacetate + ATP = phosphoenolpyruvate + ADP + CO2. It functions in the pathway carbohydrate biosynthesis; gluconeogenesis. In terms of biological role, involved in the gluconeogenesis. Catalyzes the conversion of oxaloacetate (OAA) to phosphoenolpyruvate (PEP) through direct phosphoryl transfer between the nucleoside triphosphate and OAA. In Lachnospira eligens (strain ATCC 27750 / DSM 3376 / VPI C15-48 / C15-B4) (Eubacterium eligens), this protein is Phosphoenolpyruvate carboxykinase (ATP).